Here is a 104-residue protein sequence, read N- to C-terminus: Replication restart protein PriB (104 aa).

One can recognise an SSB domain in the interval 2–101 (TNRLVLSGTV…LHAEQIELID (100 aa)). A disulfide bridge connects residues cysteine 48 and cysteine 80. The short motif at 82-89 (KAKNGLSK) is the L45 loop element.

Belongs to the PriB family. Homodimer. Primosome assembly occurs via a 'hand-off' mechanism. PriA binds to replication forks, subsequently PriB then DnaT bind; DnaT then displaces ssDNA to generate the helicase loading substrate, which allows DnaC to load helicase DnaB onto the fork. ssDNA is displaced from the PriB-ssDNA complex by DnaT. In a PriA-PriB-replication fork structure, movement of the PriA CRR domain exposes a surface to which PriB binds and contacts ssDNA emerging from the PriA pore. Binds PriA; binding is improved in the presence of ssDNA. Weakly binds DnaT; binding is improved in the presence of ssDNA; as DnaT levels increase PriB dissociates from ssDNA. Component of the replication restart primosome, which is composed of PriA, PriB, PriC, DnaB and DnaT; DnaG primase associates transiently with this complex. Component of the preprimosomal complex composed of one monomer of PriC and DnaT, two monomers of PriA, two dimers of PriB and one hexamer of DnaB. In terms of processing, an intersubunit disulfide bond is seen in some crystals.

Its function is as follows. Involved in the restart of stalled replication forks, which reloads the replicative helicase (DnaB) on sites other than the origin of replication; the PriA-PriB pathway is the major replication restart pathway. There are several restart pathways, the PriA-PriB pathway is subdivided into 2 distinct pathways. priB and priC have redundant roles in the cell. During primosome assembly it facilitates complex formation between PriA and DnaT on DNA; stabilizes PriA on DNA, presumably by preventing or inhibiting PriA DNA translocation activity. Forms a branched DNA-PriA-PriB complex when the lagging strand is single-stranded (ss)DNA. Binds ssDNA in the presence and absence of ssDNA DNA-binding protein (SSB), does not bind branched structures. DNA binding, forming spiral filaments on ssDNA, is cooperative. Stimulates the helicase activity of PriA. The homodimer binds 12 nucleotides of ssDNA. Binds homo-pyrimidine tracts better than homo-purine tracts. Functionally, genetic interactions among priB, dam, lexA, nagC, polA, rdgB, rdgB, rep and uup link the PriA-PriB replication restart pathway to DNA double-strand break repair. The polypeptide is Replication restart protein PriB (Escherichia coli (strain K12)).